The sequence spans 739 residues: Phosphoribosylformylglycinamidine synthase subunit PurL (739 aa).

Residue histidine 54 is part of the active site. Residues tyrosine 57 and lysine 96 each coordinate ATP. Residue glutamate 98 coordinates Mg(2+). Substrate contacts are provided by residues 99 to 102 (SHNH) and arginine 121. The Proton acceptor role is filled by histidine 100. Aspartate 122 serves as a coordination point for Mg(2+). Glutamine 245 contributes to the substrate binding site. Aspartate 275 lines the Mg(2+) pocket. Residue 319 to 321 (ESQ) coordinates substrate. The ATP site is built by aspartate 504 and glycine 541. A Mg(2+)-binding site is contributed by asparagine 542. Serine 544 provides a ligand contact to substrate.

This sequence belongs to the FGAMS family. Monomer. Part of the FGAM synthase complex composed of 1 PurL, 1 PurQ and 2 PurS subunits.

The protein resides in the cytoplasm. The enzyme catalyses N(2)-formyl-N(1)-(5-phospho-beta-D-ribosyl)glycinamide + L-glutamine + ATP + H2O = 2-formamido-N(1)-(5-O-phospho-beta-D-ribosyl)acetamidine + L-glutamate + ADP + phosphate + H(+). Its pathway is purine metabolism; IMP biosynthesis via de novo pathway; 5-amino-1-(5-phospho-D-ribosyl)imidazole from N(2)-formyl-N(1)-(5-phospho-D-ribosyl)glycinamide: step 1/2. Its function is as follows. Part of the phosphoribosylformylglycinamidine synthase complex involved in the purines biosynthetic pathway. Catalyzes the ATP-dependent conversion of formylglycinamide ribonucleotide (FGAR) and glutamine to yield formylglycinamidine ribonucleotide (FGAM) and glutamate. The FGAM synthase complex is composed of three subunits. PurQ produces an ammonia molecule by converting glutamine to glutamate. PurL transfers the ammonia molecule to FGAR to form FGAM in an ATP-dependent manner. PurS interacts with PurQ and PurL and is thought to assist in the transfer of the ammonia molecule from PurQ to PurL. This Lactococcus lactis subsp. cremoris (strain SK11) protein is Phosphoribosylformylglycinamidine synthase subunit PurL.